Here is a 202-residue protein sequence, read N- to C-terminus: Adenosylcobalamin/alpha-ribazole phosphatase (202 aa).

The Tele-phosphohistidine intermediate role is filled by His-8. Glu-81 acts as the Proton donor/acceptor in catalysis.

This sequence belongs to the phosphoglycerate mutase family. As to quaternary structure, monomer.

The catalysed reaction is adenosylcob(III)alamin 5'-phosphate + H2O = adenosylcob(III)alamin + phosphate. The enzyme catalyses alpha-ribazole 5'-phosphate + H2O = alpha-ribazole + phosphate. The protein operates within nucleoside biosynthesis; alpha-ribazole biosynthesis; alpha-ribazole from 5,6-dimethylbenzimidazole: step 2/2. Functionally, catalyzes the conversion of adenosylcobalamin 5'-phosphate to adenosylcobalamin (vitamin B12); involved in the assembly of the nucleotide loop of cobalamin. Also catalyzes the hydrolysis of the phospho group from alpha-ribazole 5'-phosphate to form alpha-ribazole. This is Adenosylcobalamin/alpha-ribazole phosphatase (cobC) from Salmonella typhimurium (strain LT2 / SGSC1412 / ATCC 700720).